The primary structure comprises 60 residues: Protein YoaG (60 aa).

As to quaternary structure, homodimer.

The protein is Protein YoaG (yoaG) of Escherichia coli O157:H7.